Here is a 452-residue protein sequence, read N- to C-terminus: Ribosomal protein uS12 methylthiotransferase RimO (452 aa).

The 116-residue stretch at 3–118 (GKIGFVSLGC…VMQVIHLHLP (116 aa)) folds into the MTTase N-terminal domain. Residues C12, C48, C77, C149, C153, and C156 each contribute to the [4Fe-4S] cluster site. Residues 135–382 (LTPKHYAYLK…AKAEEISVGR (248 aa)) form the Radical SAM core domain. One can recognise a TRAM domain in the interval 384 to 452 (AKKIGKRLQV…SQGHDLIAET (69 aa)).

It belongs to the methylthiotransferase family. RimO subfamily. [4Fe-4S] cluster is required as a cofactor.

It is found in the cytoplasm. It catalyses the reaction L-aspartate(89)-[ribosomal protein uS12]-hydrogen + (sulfur carrier)-SH + AH2 + 2 S-adenosyl-L-methionine = 3-methylsulfanyl-L-aspartate(89)-[ribosomal protein uS12]-hydrogen + (sulfur carrier)-H + 5'-deoxyadenosine + L-methionine + A + S-adenosyl-L-homocysteine + 2 H(+). Catalyzes the methylthiolation of an aspartic acid residue of ribosomal protein uS12. In Polynucleobacter necessarius subsp. necessarius (strain STIR1), this protein is Ribosomal protein uS12 methylthiotransferase RimO.